The sequence spans 347 residues: VIP36-like protein (347 aa).

An N-terminal signal peptide occupies residues 1-43; sequence MAAASRPSWWQRWRRRAWARDGAKLLLFLLLLGSGPGPRHVRA. Topologically, residues 44 to 312 are lumenal; the sequence is GQAVEYLKRE…VPPTPLSGLA (269 aa). The L-type lectin-like domain maps to 48 to 273; it reads EYLKREHSLS…DVISLKLFEL (226 aa). Residues S92 and D127 each contribute to the a carbohydrate site. 3 residues coordinate Ca(2+): D158, Y160, and N162. 160–162 contacts a carbohydrate; that stretch reads YPN. A glycan (N-linked (GlcNAc...) asparagine) is linked at N180. H187 is an a carbohydrate binding site. Residue D190 coordinates Ca(2+). C199 and C236 are oxidised to a cystine. Residue 257–259 participates in a carbohydrate binding; sequence GDL. The helical transmembrane segment at 313-335 threads the bilayer; sequence LFLIVFFSLVFSVFAIVIGIILY. Topologically, residues 336–347 are cytoplasmic; the sequence is NKWQDQSRKRFY. The short motif at 343 to 345 is the Endoplasmic reticulum retention signal element; it reads RKR.

It is found in the endoplasmic reticulum membrane. Its subcellular location is the golgi apparatus membrane. Functionally, may be involved in the regulation of export from the endoplasmic reticulum of a subset of glycoproteins. May function as a regulator of ERGIC-53. This chain is VIP36-like protein (Lman2l), found in Mus musculus (Mouse).